A 181-amino-acid chain; its full sequence is Small ribosomal subunit protein uS4 (181 aa).

Positions 106–168 (RRLQTLVYRK…PTSRIVKAKV (63 aa)) constitute an S4 RNA-binding domain.

It belongs to the universal ribosomal protein uS4 family. In terms of assembly, part of the 30S ribosomal subunit. Contacts protein S5. The interaction surface between S4 and S5 is involved in control of translational fidelity.

One of the primary rRNA binding proteins, it binds directly to 16S rRNA where it nucleates assembly of the body of the 30S subunit. Functionally, with S5 and S12 plays an important role in translational accuracy. The polypeptide is Small ribosomal subunit protein uS4 (Caldivirga maquilingensis (strain ATCC 700844 / DSM 13496 / JCM 10307 / IC-167)).